Reading from the N-terminus, the 93-residue chain is Cell division protein CrgA (93 aa).

2 helical membrane passes run 31 to 51 (VWFV…LMVF) and 70 to 90 (LGPW…LLTM).

It belongs to the CrgA family.

The protein localises to the cell membrane. Functionally, involved in cell division. This chain is Cell division protein CrgA, found in Mycobacterium marinum (strain ATCC BAA-535 / M).